A 472-amino-acid chain; its full sequence is Riboflavin transporter RibJ (472 aa).

At 1–11 the chain is on the cytoplasmic side; that stretch reads MLPCFTRKPVD. Residues 12–32 form a helical membrane-spanning segment; sequence HPLGFLVALSGLLMQLMSYGI. Residues 33 to 58 lie on the Extracellular side of the membrane; it reads DNSYSIFSDDMHKDPSLGYPSVTTIS. Residues 59-79 form a helical membrane-spanning segment; sequence LGNSVSLGLSPAFGVLCGFLV. The Cytoplasmic segment spans residues 80–85; it reads DRVPPR. A helical transmembrane segment spans residues 86 to 106; sequence LMMAVSTLMLFAGLWLSSTFA. At 107–108 the chain is on the extracellular side; sequence HN. N-linked (GlcNAc...) asparagine glycosylation occurs at Asn108. A helical membrane pass occupies residues 109–129; sequence VTAVTFSYCLLASISSACMLS. Topologically, residues 130–144 are cytoplasmic; sequence PGAAATSSWFNRYQG. Residues 145–165 traverse the membrane as a helical segment; that stretch reads LAMGINFSGGGVGSAIIPSLA. Residues 166–179 lie on the Extracellular side of the membrane; that stretch reads GKWVVAYGWRKTFR. A helical membrane pass occupies residues 180–196; it reads LMSAFCAIGVVATLLSA. Over 197–271 the chain is Cytoplasmic; sequence RRAPPKKEEA…TMFSRAFLGN (75 aa). A disordered region spans residues 200–248; it reads PPKKEEAGPSEYDEGQERQEQGEEEQAHTDEENRNNNNSNGETTPARRG. A compositionally biased stretch (basic and acidic residues) spans 214–233; the sequence is GQERQEQGEEEQAHTDEENR. A helical transmembrane segment spans residues 272–292; that stretch reads FFCWLIFSWAFYSLIYVAVPY. At 293 to 315 the chain is on the extracellular side; the sequence is VSSMGKAGTVYADISPIPTDIAS. Residues 316-336 traverse the membrane as a helical segment; it reads TLFTFYGVFQIVGSILVGWLA. Residues 337-341 lie on the Cytoplasmic side of the membrane; sequence TGTTN. The helical transmembrane segment at 342–362 threads the bilayer; that stretch reads EFAYVLCATIGGIFCAFLGFC. Topologically, residues 363–365 are extracellular; that stretch reads RSY. Residues 366 to 386 form a helical membrane-spanning segment; sequence VAFALLLCVIGFCMAGMFAVM. Over 387 to 399 the chain is Cytoplasmic; the sequence is PALIAERLYGPNL. A helical membrane pass occupies residues 400–420; it reads GFYMGAVFLAGVVGGFSAPPI. Over 421-434 the chain is Extracellular; it reads QAELQQRHYGNYTY. N-linked (GlcNAc...) asparagine glycosylation occurs at Asn431. Residues 435–455 form a helical membrane-spanning segment; the sequence is VCVFMSACMTLAAAVCYITMW. Over 456 to 472 the chain is Cytoplasmic; it reads RDKRVRIVSAAAEAKLA.

The protein belongs to the major facilitator superfamily. RibJ family.

It localises to the cell membrane. Its function is as follows. Transporter involved in riboflavin (vitamin B2) uptake. Also transports FMN and FAD. The protein is Riboflavin transporter RibJ of Trypanosoma cruzi (strain CL Brener).